The following is a 480-amino-acid chain: Probable G-protein coupled receptor Mth-like 6 (480 aa).

Positions 1–20 (MLLNILAIILVFVISSQSEA) are cleaved as a signal peptide. Residues 21 to 202 (VIPGCDYFDT…LEHVYIPKSM (182 aa)) are Extracellular-facing. Intrachain disulfides connect Cys-25–Cys-78, Cys-80–Cys-85, Cys-89–Cys-179, and Cys-90–Cys-101. The N-linked (GlcNAc...) asparagine glycan is linked to Asn-40. Asn-160 and Asn-170 each carry an N-linked (GlcNAc...) asparagine glycan. The chain crosses the membrane as a helical span at residues 203 to 225 (PAVPQVGTISMVGCILTIAVYLY). The Cytoplasmic segment spans residues 226 to 231 (IKKLRN). A helical membrane pass occupies residues 232 to 254 (LLGKCFICYVFCKFVQYLIWAGG). Topologically, residues 255–263 (DLNLWNNIC) are extracellular. A helical transmembrane segment spans residues 264–283 (SLAGYTNYFFALASHFWLSV). At 284 to 303 (MSHQIWKNLRLINRDERSYH) the chain is on the cytoplasmic side. The chain crosses the membrane as a helical span at residues 304–326 (FLIYNIYGWGTPAIMTAITYLVD). The Extracellular segment spans residues 327–356 (WAWEDRPDKLNWIPGVGLYRCWINTYDWSA). Residues 357–379 (MIYLYGPMLILSLFNVVTFILTV) form a helical membrane-spanning segment. Residues 380–405 (NHIMKIKSSVKSSTQQQRKCIQNNDF) lie on the Cytoplasmic side of the membrane. Residues 406-428 (LLYLRLSVMMGVTGISEVITYFV) traverse the membrane as a helical segment. At 429-437 (KRHKFWRQV) the chain is on the extracellular side. Residues 438-457 (LRVPNFFHLGSGIVVFVLFI) traverse the membrane as a helical segment. Topologically, residues 458–480 (LKRSTFQMIMERISGPRRQQPAS) are cytoplasmic.

It belongs to the G-protein coupled receptor 2 family. Mth subfamily.

It is found in the cell membrane. The protein is Probable G-protein coupled receptor Mth-like 6 (mthl6) of Drosophila melanogaster (Fruit fly).